A 191-amino-acid polypeptide reads, in one-letter code: Ribosome maturation factor RimM (191 aa).

One can recognise a PRC barrel domain in the interval 99-172; that stretch reads TDEFYQIDLI…FLVVDPVAAG (74 aa).

This sequence belongs to the RimM family. Binds ribosomal protein uS19.

It is found in the cytoplasm. Functionally, an accessory protein needed during the final step in the assembly of 30S ribosomal subunit, possibly for assembly of the head region. Essential for efficient processing of 16S rRNA. May be needed both before and after RbfA during the maturation of 16S rRNA. It has affinity for free ribosomal 30S subunits but not for 70S ribosomes. In Bartonella bacilliformis (strain ATCC 35685 / KC583 / Herrer 020/F12,63), this protein is Ribosome maturation factor RimM.